The sequence spans 337 residues: DNA-directed RNA polymerase subunit alpha (337 aa).

Residues 1–233 form an alpha N-terminal domain (alpha-NTD) region; it reads MIQKNWQELI…DQLSVFVNFK (233 aa). The alpha C-terminal domain (alpha-CTD) stretch occupies residues 249–337; sequence FNPALLKKVD…DLAKHYEDQY (89 aa).

The protein belongs to the RNA polymerase alpha chain family. Homodimer. The RNAP catalytic core consists of 2 alpha, 1 beta, 1 beta' and 1 omega subunit. When a sigma factor is associated with the core the holoenzyme is formed, which can initiate transcription.

The enzyme catalyses RNA(n) + a ribonucleoside 5'-triphosphate = RNA(n+1) + diphosphate. Functionally, DNA-dependent RNA polymerase catalyzes the transcription of DNA into RNA using the four ribonucleoside triphosphates as substrates. This is DNA-directed RNA polymerase subunit alpha from Bartonella bacilliformis (strain ATCC 35685 / KC583 / Herrer 020/F12,63).